The primary structure comprises 364 residues: Abhydrolase domain-containing protein C57A10.08c (364 aa).

The Cytoplasmic segment spans residues 1–8 (MYFFTISR). Residues 9 to 29 (LTSFISYGILGALGILTFLYL) form a helical; Signal-anchor for type II membrane protein membrane-spanning segment. Topologically, residues 30 to 364 (YDAYLAKSFQ…DKFSTTDHNI (335 aa)) are lumenal. Catalysis depends on Ser-183, which acts as the Charge relay system. N-linked (GlcNAc...) asparagine glycosylation is present at Asn-326. The active-site Charge relay system is His-336.

This sequence belongs to the AB hydrolase superfamily.

The protein resides in the endoplasmic reticulum membrane. The protein is Abhydrolase domain-containing protein C57A10.08c of Schizosaccharomyces pombe (strain 972 / ATCC 24843) (Fission yeast).